A 503-amino-acid chain; its full sequence is ATP synthase subunit alpha (503 aa).

Position 170–177 (170–177 (GDKQTGKT)) interacts with ATP.

This sequence belongs to the ATPase alpha/beta chains family. As to quaternary structure, F-type ATPases have 2 components, CF(1) - the catalytic core - and CF(0) - the membrane proton channel. CF(1) has five subunits: alpha(3), beta(3), gamma(1), delta(1), epsilon(1). CF(0) has three main subunits: a(1), b(2) and c(9-12). The alpha and beta chains form an alternating ring which encloses part of the gamma chain. CF(1) is attached to CF(0) by a central stalk formed by the gamma and epsilon chains, while a peripheral stalk is formed by the delta and b chains.

It is found in the cell inner membrane. It carries out the reaction ATP + H2O + 4 H(+)(in) = ADP + phosphate + 5 H(+)(out). Functionally, produces ATP from ADP in the presence of a proton gradient across the membrane. The alpha chain is a regulatory subunit. The protein is ATP synthase subunit alpha of Helicobacter pylori (strain P12).